A 192-amino-acid polypeptide reads, in one-letter code: A-type ATP synthase subunit E (192 aa).

Belongs to the V-ATPase E subunit family. In terms of assembly, has multiple subunits with at least A(3), B(3), C, D, E, F, H, I and proteolipid K(x).

It is found in the cell membrane. Functionally, component of the A-type ATP synthase that produces ATP from ADP in the presence of a proton gradient across the membrane. The protein is A-type ATP synthase subunit E of Methanoculleus marisnigri (strain ATCC 35101 / DSM 1498 / JR1).